A 182-amino-acid polypeptide reads, in one-letter code: Nudix hydrolase 17, mitochondrial (182 aa).

A mitochondrion-targeting transit peptide spans 1–26; the sequence is MGVEKMVCLASRTGRQFQRYNKGRRQ. The Nudix hydrolase domain maps to 27–158; it reads VVGCVPYRFK…WMKEALDVLV (132 aa). The short motif at 65–86 is the Nudix box element; the sequence is GGWELDESVEEAASRECLEEAG. Mg(2+)-binding residues include Glu-80 and Glu-84.

The protein belongs to the Nudix hydrolase family. It depends on Mg(2+) as a cofactor. Mn(2+) is required as a cofactor. Expressed in roots, leaves, stems and inflorescences.

Its subcellular location is the mitochondrion. In terms of biological role, probably mediates the hydrolysis of some nucleoside diphosphate derivatives. The sequence is that of Nudix hydrolase 17, mitochondrial (NUDT17) from Arabidopsis thaliana (Mouse-ear cress).